A 384-amino-acid polypeptide reads, in one-letter code: Guanine nucleotide-binding protein alpha-1 subunit (384 aa).

The disordered stretch occupies residues 1–22; it reads MGSLCSRNKHYSQADDEENTQT. Glycine 2 carries N-myristoyl glycine lipidation. Cysteine 5 is lipidated: S-palmitoyl cysteine. Residues 38 to 384 form the G-alpha domain; that stretch reads HIQKLLLLGA…RRNLFEAGLL (347 aa). A G1 motif region spans residues 41 to 54; sequence KLLLLGAGDSGKST. Aspartate 49, serine 50, glycine 51, lysine 52, serine 53, threonine 54, aspartate 163, leucine 188, threonine 194, glycine 222, asparagine 288, lysine 289, aspartate 291, and alanine 356 together coordinate GTP. Serine 53 lines the Mg(2+) pocket. The interval 186–194 is G2 motif; sequence DVLFARIRT. Mg(2+) is bound at residue threonine 194. Residues 215–224 form a G3 motif region; that stretch reads YRLFDVGGQR. A G4 motif region spans residues 284–291; the sequence is MLFLNKFD. The G5 motif stretch occupies residues 354-359; it reads TTALDQ.

Belongs to the G-alpha family. As to quaternary structure, g proteins are composed of 3 units; alpha, beta and gamma. The alpha chain contains the guanine nucleotide binding site. It depends on Mg(2+) as a cofactor.

In terms of biological role, guanine nucleotide-binding proteins (G proteins) are involved as modulators or transducers in various transmembrane signaling systems. The sequence is that of Guanine nucleotide-binding protein alpha-1 subunit (GPA1) from Solanum tuberosum (Potato).